A 411-amino-acid polypeptide reads, in one-letter code: Anthranilate synthase component 1 (411 aa).

L-tryptophan contacts are provided by residues Ser27 and 203–205 (PYM). 237–238 (GT) is a chorismate binding site. Residue Glu262 participates in Mg(2+) binding. Residues Tyr350, Arg369, 382-384 (GAG), and Gly384 each bind chorismate. Glu397 is a Mg(2+) binding site.

It belongs to the anthranilate synthase component I family. Heterotetramer consisting of two non-identical subunits: a beta subunit (TrpG) and a large alpha subunit (TrpE). Requires Mg(2+) as cofactor.

The enzyme catalyses chorismate + L-glutamine = anthranilate + pyruvate + L-glutamate + H(+). It functions in the pathway amino-acid biosynthesis; L-tryptophan biosynthesis; L-tryptophan from chorismate: step 1/5. Feedback inhibited by tryptophan. Part of a heterotetrameric complex that catalyzes the two-step biosynthesis of anthranilate, an intermediate in the biosynthesis of L-tryptophan. In the first step, the glutamine-binding beta subunit (TrpG) of anthranilate synthase (AS) provides the glutamine amidotransferase activity which generates ammonia as a substrate that, along with chorismate, is used in the second step, catalyzed by the large alpha subunit of AS (TrpE) to produce anthranilate. In the absence of TrpG, TrpE can synthesize anthranilate directly from chorismate and high concentrations of ammonia. In Archaeoglobus fulgidus (strain ATCC 49558 / DSM 4304 / JCM 9628 / NBRC 100126 / VC-16), this protein is Anthranilate synthase component 1 (trpE).